Reading from the N-terminus, the 131-residue chain is ATP synthase epsilon chain, chloroplastic (131 aa).

Belongs to the ATPase epsilon chain family. F-type ATPases have 2 components, CF(1) - the catalytic core - and CF(0) - the membrane proton channel. CF(1) has five subunits: alpha(3), beta(3), gamma(1), delta(1), epsilon(1). CF(0) has three main subunits: a, b and c.

Its subcellular location is the plastid. It is found in the chloroplast thylakoid membrane. In terms of biological role, produces ATP from ADP in the presence of a proton gradient across the membrane. In Oltmannsiellopsis viridis (Marine flagellate), this protein is ATP synthase epsilon chain, chloroplastic.